A 421-amino-acid chain; its full sequence is UDP-N-acetylglucosamine 1-carboxyvinyltransferase (421 aa).

22-23 (KN) contacts phosphoenolpyruvate. R93 contributes to the UDP-N-acetyl-alpha-D-glucosamine binding site. Catalysis depends on C117, which acts as the Proton donor. A 2-(S-cysteinyl)pyruvic acid O-phosphothioketal modification is found at C117. Residues 122-126 (RPVDL), D308, and V330 contribute to the UDP-N-acetyl-alpha-D-glucosamine site.

It belongs to the EPSP synthase family. MurA subfamily.

It is found in the cytoplasm. The enzyme catalyses phosphoenolpyruvate + UDP-N-acetyl-alpha-D-glucosamine = UDP-N-acetyl-3-O-(1-carboxyvinyl)-alpha-D-glucosamine + phosphate. The protein operates within cell wall biogenesis; peptidoglycan biosynthesis. Functionally, cell wall formation. Adds enolpyruvyl to UDP-N-acetylglucosamine. The chain is UDP-N-acetylglucosamine 1-carboxyvinyltransferase from Azotobacter vinelandii (strain DJ / ATCC BAA-1303).